We begin with the raw amino-acid sequence, 437 residues long: Transcription factor 12 (437 aa).

3 disordered regions span residues 1–68, 80–123, and 244–335; these read EFHD…QTGD, PDHT…YENS, and ASNT…ERRM. Residues 13 to 37 show a composition bias toward polar residues; the sequence is VSPTDISTSLPPMSSFHRGSTSSSP. Thr44 is subject to Phosphothreonine. Ser64 carries the post-translational modification Phosphoserine. Low complexity predominate over residues 83–94; sequence TSSSFPSNPSTP. Composition is skewed to polar residues over residues 95–107 and 114–123; these read VGSPSPLTGTSQW and APSSPSYENS. Basic and acidic residues-rich tracts occupy residues 273–285 and 291–306; these read IKTENKEKDENLH and DDMKSDDESSQKDIKV. Residue Lys274 forms a Glycyl lysine isopeptide (Lys-Gly) (interchain with G-Cter in SUMO2) linkage. Position 295 is a phosphoserine (Ser295). Lys305 participates in a covalent cross-link: Glycyl lysine isopeptide (Lys-Gly) (interchain with G-Cter in SUMO2). Position 312 is a phosphothreonine (Thr312). Residues Ser313 and Ser314 each carry the phosphoserine modification. Positions 323-335 are enriched in basic and acidic residues; that stretch reads PEQKIEREKERRM. Residues 332–385 enclose the bHLH domain; that stretch reads ERRMANNARERLRVRDINEAFKELGRMCQLHLKSEKPQTKLLILHQAVAVILSL. Glycyl lysine isopeptide (Lys-Gly) (interchain with G-Cter in SUMO2) cross-links involve residues Lys364 and Lys408. Positions 387 to 410 are class A specific domain; the sequence is QQVRERNLNPKAACLKRREEEKVS. The segment at 405 to 437 is disordered; it reads EEEKVSAASAEPPTTLPGTHPGLSETTNPMGHL. Residues 416-427 are compositionally biased toward low complexity; that stretch reads PPTTLPGTHPGL. Polar residues predominate over residues 428-437; that stretch reads SETTNPMGHL.

Efficient DNA binding requires dimerization with another bHLH protein. Forms homo- or heterooligomers with myogenin, E12 and ITF2 proteins. Interacts with NEUROD2. Interacts with PTF1A. Interacts with RUNX1T1. Interacts with BHLHA9.

It is found in the nucleus. In terms of biological role, transcriptional regulator. Involved in the initiation of neuronal differentiation. Activates transcription by binding to the E box (5'-CANNTG-3'). Participates in the control of inducible RP4 gene expression in salivary cells. Binds to the RIPE3 element of the insulin II promoter. May be involved in the functional network that regulates the development of the GnRH axis. The polypeptide is Transcription factor 12 (TCF12) (Mesocricetus auratus (Golden hamster)).